We begin with the raw amino-acid sequence, 355 residues long: MKITALASAILAVAQGALALPARAPALDITLSQVNNTRIKAVVKNSGTEKITFVHLNFFNDPSPVKKVSLYRNATEVEFTGIKQRLRSDGLSNDALTTLAPGATYEDEFDIASTANLTQGGPVTVRTQGFVPIAMNNKIAGYIPYSSNELELEVDAEKAVAVPASIKPLDRRTKITSSCTGNRATVLNTALRNAASIASKAADAASSGSSALFTEYFKSTSGNIRSAVAARLKAVASEASMNGGGSTTYYCSDPYGYCDSNVLAYTLPSTNEVVNCELFYTLQEVTNDCHGQDQATTIIHEFTHAPGVYPPGTEDLGYGYSAATALSTSNALNNADSYALFANGTSSFCVMTAFS.

Residues 1 to 19 (MKITALASAILAVAQGALA) form the signal peptide. The propeptide occupies 20-172 (LPARAPALDI…PASIKPLDRR (153 aa)). 2 disulfides stabilise this stretch: Cys179/Cys251 and Cys258/Cys276. His300 lines the Zn(2+) pocket. Glu301 is a catalytic residue. His304 and Asp315 together coordinate Zn(2+).

This sequence belongs to the peptidase M35 family. Zn(2+) is required as a cofactor.

Its subcellular location is the secreted. It catalyses the reaction Preferential cleavage of bonds with hydrophobic residues in P1'. Also 3-Asn-|-Gln-4 and 8-Gly-|-Ser-9 bonds in insulin B chain.. Its function is as follows. Secreted metalloproteinase that allows assimilation of proteinaceous substrates. Shows high activities on basic nuclear substrates such as histone and protamine. May be involved in virulence. The polypeptide is Neutral protease 2 homolog AFUB_100460 (Aspergillus fumigatus (strain CBS 144.89 / FGSC A1163 / CEA10) (Neosartorya fumigata)).